Here is a 186-residue protein sequence, read N- to C-terminus: Elongation factor P (186 aa).

Belongs to the elongation factor P family.

The protein localises to the cytoplasm. The protein operates within protein biosynthesis; polypeptide chain elongation. Involved in peptide bond synthesis. Stimulates efficient translation and peptide-bond synthesis on native or reconstituted 70S ribosomes in vitro. Probably functions indirectly by altering the affinity of the ribosome for aminoacyl-tRNA, thus increasing their reactivity as acceptors for peptidyl transferase. This is Elongation factor P from Beutenbergia cavernae (strain ATCC BAA-8 / DSM 12333 / CCUG 43141 / JCM 11478 / NBRC 16432 / NCIMB 13614 / HKI 0122).